The chain runs to 206 residues: Small ribosomal subunit protein uS4 (206 aa).

The 73-residue stretch at 96 to 168 (SRLDNVVYRM…LELAEQREKP (73 aa)) folds into the S4 RNA-binding domain.

This sequence belongs to the universal ribosomal protein uS4 family. Part of the 30S ribosomal subunit. Contacts protein S5. The interaction surface between S4 and S5 is involved in control of translational fidelity.

Functionally, one of the primary rRNA binding proteins, it binds directly to 16S rRNA where it nucleates assembly of the body of the 30S subunit. Its function is as follows. With S5 and S12 plays an important role in translational accuracy. This Baumannia cicadellinicola subsp. Homalodisca coagulata protein is Small ribosomal subunit protein uS4.